We begin with the raw amino-acid sequence, 167 residues long: S-ribosylhomocysteine lyase (167 aa).

Fe cation-binding residues include histidine 54, histidine 58, and cysteine 128.

The protein belongs to the LuxS family. As to quaternary structure, homodimer. Fe cation serves as cofactor.

It carries out the reaction S-(5-deoxy-D-ribos-5-yl)-L-homocysteine = (S)-4,5-dihydroxypentane-2,3-dione + L-homocysteine. Its function is as follows. Involved in the synthesis of autoinducer 2 (AI-2) which is secreted by bacteria and is used to communicate both the cell density and the metabolic potential of the environment. The regulation of gene expression in response to changes in cell density is called quorum sensing. Catalyzes the transformation of S-ribosylhomocysteine (RHC) to homocysteine (HC) and 4,5-dihydroxy-2,3-pentadione (DPD). The protein is S-ribosylhomocysteine lyase of Haemophilus influenzae (strain 86-028NP).